A 204-amino-acid polypeptide reads, in one-letter code: CASP-like protein 2U1 (204 aa).

Over 1–36 the chain is Cytoplasmic; it reads MGVLGGDAHVPIGSQVSPGSVVVTNNESFGHRKLLK. The helical transmembrane segment at 37–57 threads the bilayer; sequence GVDFLVRIKAFAFCLAVIVLL. Residues 58–84 are Extracellular-facing; it reads KNNVQTTVIAPGIVLQAKYNNTKAPVS. A glycan (N-linked (GlcNAc...) asparagine) is linked at N77. The helical transmembrane segment at 85–105 threads the bilayer; the sequence is LLVLASICCGYAFLQAVVSLL. Topologically, residues 106-117 are cytoplasmic; it reads SFIRDKRVLNNT. The helical transmembrane segment at 118-138 threads the bilayer; it reads VLAWLTFLLDQVLTYLLLGSA. The Extracellular segment spans residues 139–170; the sequence is AATAEAAYIAKRGEDKVQWKAVCGPFKRFCDH. The chain crosses the membrane as a helical span at residues 171–191; sequence FAATVFLSFIAVIAFAVSAAI. The Cytoplasmic portion of the chain corresponds to 192 to 204; the sequence is SAYYLFRRSKGFK.

It belongs to the Casparian strip membrane proteins (CASP) family. In terms of assembly, homodimer and heterodimers.

It localises to the cell membrane. This Selaginella moellendorffii (Spikemoss) protein is CASP-like protein 2U1.